The primary structure comprises 90 residues: UPF0297 protein Cthe_0151 (90 aa).

The protein belongs to the UPF0297 family.

The polypeptide is UPF0297 protein Cthe_0151 (Acetivibrio thermocellus (strain ATCC 27405 / DSM 1237 / JCM 9322 / NBRC 103400 / NCIMB 10682 / NRRL B-4536 / VPI 7372) (Clostridium thermocellum)).